The primary structure comprises 415 residues: Casein kinase I isoform delta (415 aa).

Residues 9-277 (YRLGRKIGSG…YLRQLFRNLF (269 aa)) enclose the Protein kinase domain. ATP-binding positions include 15–23 (IGSGSFGDI) and lysine 38. Catalysis depends on aspartate 128, which acts as the Proton acceptor. The tract at residues 278 to 364 (HRQGFSYDYV…TSPRPVSGME (87 aa)) is centrosomal localization signal (CLS). Positions 301 to 315 (ADDAERERRDREERL) are enriched in basic and acidic residues. Residues 301 to 415 (ADDAERERRD…SSGLQSVVHR (115 aa)) form a disordered region. Residues 317-342 (HSRNPATRGLPSTASGRLRGTQEVAP) form an autoinhibitory region. A phosphoserine mark is found at serine 328 and serine 331. A compositionally biased stretch (polar residues) spans 347–358 (TPTSHTANTSPR). Serine 370 is subject to Phosphoserine. Omega-N-methylarginine is present on arginine 375. Positions 380–400 (NISSSDLTGRQDTSRMSTSQI) are enriched in polar residues. Phosphoserine is present on residues serine 382, serine 383, serine 384, serine 407, and serine 411.

Belongs to the protein kinase superfamily. CK1 Ser/Thr protein kinase family. Casein kinase I subfamily. As to quaternary structure, monomer. Component of the circadian core oscillator, which includes the CRY proteins, CLOCK, or NPAS2, ARTNL/BMAL1 or ARTNL2/BMAL2, CSNK1D and/or CSNK1E, TIMELESS and the PER proteins. Interacts with DNMT1 and MAP1A. Interacts directly with PER1 and PER2 which may lead to their degradation. Interacts with MAPT/TAU, SNAPIN, DBNDD2, AIB1/NCOA3 and ESR1. Interacts with AKAP9/AKAP450; this interaction promotes centrosomal subcellular location. Binds to tubulins in mitotic cells upon DNA damage. Interacts with GJA1. Interacts with DDX3X; this interaction enhances CSNK1D kinase activity in vitro, but it is unclear whether this interaction is physiologically relevant. Interacts with FAM83A, FAM83B, FAM83E and FAM83H (via DUF1669). Post-translationally, autophosphorylated on serine and threonine residues; this autophosphorylation represses activity. Reactivated by phosphatase-mediated dephosphorylation. May be dephosphorylated by PP1.

Its subcellular location is the cytoplasm. The protein localises to the nucleus. The protein resides in the cytoskeleton. It is found in the microtubule organizing center. It localises to the centrosome. Its subcellular location is the perinuclear region. The protein localises to the cell membrane. The protein resides in the spindle. It is found in the golgi apparatus. It catalyses the reaction L-seryl-[protein] + ATP = O-phospho-L-seryl-[protein] + ADP + H(+). The catalysed reaction is L-threonyl-[protein] + ATP = O-phospho-L-threonyl-[protein] + ADP + H(+). It carries out the reaction L-seryl-[tau protein] + ATP = O-phospho-L-seryl-[tau protein] + ADP + H(+). The enzyme catalyses L-threonyl-[tau protein] + ATP = O-phospho-L-threonyl-[tau protein] + ADP + H(+). With respect to regulation, drug-mediated inhibition leads to a delay of the oscillations with the magnitude of this effect dependent upon the timing of drug administration. Inhibited by phosphorylation. Exhibits substrate-dependent heparin activation. Functionally, essential serine/threonine-protein kinase that regulates diverse cellular growth and survival processes including Wnt signaling, DNA repair and circadian rhythms. It can phosphorylate a large number of proteins. Casein kinases are operationally defined by their preferential utilization of acidic proteins such as caseins as substrates. Phosphorylates connexin-43/GJA1, MAP1A, SNAPIN, MAPT/TAU, TOP2A, DCK, HIF1A, EIF6, p53/TP53, DVL2, DVL3, ESR1, AIB1/NCOA3, DNMT1, PKD2, YAP1, PER1 and PER2. Central component of the circadian clock. In balance with PP1, determines the circadian period length through the regulation of the speed and rhythmicity of PER1 and PER2 phosphorylation. Controls PER1 and PER2 nuclear transport and degradation. YAP1 phosphorylation promotes its SCF(beta-TRCP) E3 ubiquitin ligase-mediated ubiquitination and subsequent degradation. DNMT1 phosphorylation reduces its DNA-binding activity. Phosphorylation of ESR1 and AIB1/NCOA3 stimulates their activity and coactivation. Phosphorylation of DVL2 and DVL3 regulates WNT3A signaling pathway that controls neurite outgrowth. Phosphorylates NEDD9/HEF1. EIF6 phosphorylation promotes its nuclear export. Triggers down-regulation of dopamine receptors in the forebrain. Activates DCK in vitro by phosphorylation. TOP2A phosphorylation favors DNA cleavable complex formation. May regulate the formation of the mitotic spindle apparatus in extravillous trophoblast. Modulates connexin-43/GJA1 gap junction assembly by phosphorylation. Probably involved in lymphocyte physiology. Regulates fast synaptic transmission mediated by glutamate. This Bos taurus (Bovine) protein is Casein kinase I isoform delta (CSNK1D).